Here is a 329-residue protein sequence, read N- to C-terminus: DNA-directed RNA polymerase subunit alpha (329 aa).

The alpha N-terminal domain (alpha-NTD) stretch occupies residues 1-235; the sequence is MQGFVEDFLK…QQLEAFVDLR (235 aa). Residues 249 to 329 form an alpha C-terminal domain (alpha-CTD) region; the sequence is FEPVLLRPVD…NWPPKSLLED (81 aa).

This sequence belongs to the RNA polymerase alpha chain family. As to quaternary structure, homodimer. The RNAP catalytic core consists of 2 alpha, 1 beta, 1 beta' and 1 omega subunit. When a sigma factor is associated with the core the holoenzyme is formed, which can initiate transcription.

It catalyses the reaction RNA(n) + a ribonucleoside 5'-triphosphate = RNA(n+1) + diphosphate. Its function is as follows. DNA-dependent RNA polymerase catalyzes the transcription of DNA into RNA using the four ribonucleoside triphosphates as substrates. This Buchnera aphidicola subsp. Cinara cedri (strain Cc) protein is DNA-directed RNA polymerase subunit alpha.